A 684-amino-acid chain; its full sequence is DNA ligase (684 aa).

Residues 46–50 (DYVYD), 100–101 (SL), and glutamate 130 each bind NAD(+). Lysine 132 (N6-AMP-lysine intermediate) is an active-site residue. Residues arginine 153, glutamate 187, lysine 303, and lysine 327 each contribute to the NAD(+) site. Zn(2+)-binding residues include cysteine 421, cysteine 424, cysteine 439, and cysteine 444. The BRCT domain occupies 604-684 (DEKNYFFNKR…DFINLSNAKK (81 aa)).

It belongs to the NAD-dependent DNA ligase family. LigA subfamily. Mg(2+) serves as cofactor. Mn(2+) is required as a cofactor.

The enzyme catalyses NAD(+) + (deoxyribonucleotide)n-3'-hydroxyl + 5'-phospho-(deoxyribonucleotide)m = (deoxyribonucleotide)n+m + AMP + beta-nicotinamide D-nucleotide.. Functionally, DNA ligase that catalyzes the formation of phosphodiester linkages between 5'-phosphoryl and 3'-hydroxyl groups in double-stranded DNA using NAD as a coenzyme and as the energy source for the reaction. It is essential for DNA replication and repair of damaged DNA. The protein is DNA ligase of Oenococcus oeni (strain ATCC BAA-331 / PSU-1).